The following is a 55-amino-acid chain: Large ribosomal subunit protein bL33 (55 aa).

It belongs to the bacterial ribosomal protein bL33 family.

The sequence is that of Large ribosomal subunit protein bL33 from Allorhizobium ampelinum (strain ATCC BAA-846 / DSM 112012 / S4) (Agrobacterium vitis (strain S4)).